The following is a 420-amino-acid chain: MKLLVVGSGGREHAIAKKLLESKDVEKVFVAPGNDGMTLDGLELVNISISEHSKLIDFAKTNDVAWTFIGPDDALAAGIVDDFNQAGLKAFGPTRAAAELEWSKDFAKEIMVKYGVSTAAYGTFSDFEEAKAYIEKHGAPIVVKADGLALGKGVVVAETVEQAVEAAHEMLLDNKFGDSGARVVIEEFLEGEEFSLFAFVNGDKFYIMPTAQDHKRAYDGDKGPNTGGMGAYAPVPHLPQSVVDTAVDTIVKPVLEGIIKEGRPYLGVIYAGLILTADGPKVIEFNSRFGDPETQIILPRLTSDFAQNITDILDGKEPNIMWTDKGVTLGVVVASKGYPLDYERGVELPAKTEGDVITYYAGAKFAENSRALLSNGGRVYMLVTTADTVKEAQASIYQELSQQKIEGLFYRTDIGSKAIK.

An ATP-grasp domain is found at 108-314; sequence KEIMVKYGVS…FAQNITDILD (207 aa). 134–195 contributes to the ATP binding site; the sequence is IEKHGAPIVV…EEFLEGEEFS (62 aa). Residues glutamate 284 and asparagine 286 each coordinate Mg(2+).

Belongs to the GARS family. It depends on Mg(2+) as a cofactor. Requires Mn(2+) as cofactor.

It carries out the reaction 5-phospho-beta-D-ribosylamine + glycine + ATP = N(1)-(5-phospho-beta-D-ribosyl)glycinamide + ADP + phosphate + H(+). Its pathway is purine metabolism; IMP biosynthesis via de novo pathway; N(1)-(5-phospho-D-ribosyl)glycinamide from 5-phospho-alpha-D-ribose 1-diphosphate: step 2/2. The polypeptide is Phosphoribosylamine--glycine ligase (Streptococcus pneumoniae (strain ATCC BAA-255 / R6)).